A 152-amino-acid polypeptide reads, in one-letter code: Putative membrane protein insertion efficiency factor (152 aa).

The segment at 81–152 (AAGGYDPVPG…IVGSGRGPWV (72 aa)) is disordered.

The protein belongs to the UPF0161 family.

The protein localises to the cell membrane. In terms of biological role, could be involved in insertion of integral membrane proteins into the membrane. The protein is Putative membrane protein insertion efficiency factor of Frankia casuarinae (strain DSM 45818 / CECT 9043 / HFP020203 / CcI3).